We begin with the raw amino-acid sequence, 552 residues long: Eukaryotic translation initiation factor 3 subunit D (552 aa).

The RNA gate stretch occupies residues 288 to 302 (DFDLLTVSETANEPP). A disordered region spans residues 525 to 552 (LPDGTFSSDEDEEEDDEDEEDEEEDEDN). Over residues 532-552 (SDEDEEEDDEDEEDEEEDEDN) the composition is skewed to acidic residues.

Belongs to the eIF-3 subunit D family. As to quaternary structure, component of the eukaryotic translation initiation factor 3 (eIF-3) complex, which is composed of 13 subunits: eif3a, eif3b, eif3c, eif3d, eif3e, eif3f, eif3g, eif3h, eif3i, eif3j, eif3k, eif3l and eif3m.

Its subcellular location is the cytoplasm. Functionally, mRNA cap-binding component of the eukaryotic translation initiation factor 3 (eIF-3) complex, which is involved in protein synthesis of a specialized repertoire of mRNAs and, together with other initiation factors, stimulates binding of mRNA and methionyl-tRNAi to the 40S ribosome. The eIF-3 complex specifically targets and initiates translation of a subset of mRNAs involved in cell proliferation. In the eIF-3 complex, eif3d specifically recognizes and binds the 7-methylguanosine cap of a subset of mRNAs. This chain is Eukaryotic translation initiation factor 3 subunit D (eif3d), found in Danio rerio (Zebrafish).